The following is a 150-amino-acid chain: UPF0178 protein Sbal223_2514 (150 aa).

This sequence belongs to the UPF0178 family.

In Shewanella baltica (strain OS223), this protein is UPF0178 protein Sbal223_2514.